A 263-amino-acid polypeptide reads, in one-letter code: Endonuclease 8 (263 aa).

Pro2 (schiff-base intermediate with DNA) is an active-site residue. The active-site Proton donor is the Glu3. The Proton donor; for beta-elimination activity role is filled by Lys53. DNA contacts are provided by Gln70, Arg125, and Asn169. The FPG-type zinc finger occupies 229–263 (KVFHRDGEPCERCGSIIEKTTLSSRPFYWCPGCQH). Arg253 functions as the Proton donor; for delta-elimination activity in the catalytic mechanism.

Belongs to the FPG family. The cofactor is Zn(2+).

It carries out the reaction 2'-deoxyribonucleotide-(2'-deoxyribose 5'-phosphate)-2'-deoxyribonucleotide-DNA = a 3'-end 2'-deoxyribonucleotide-(2,3-dehydro-2,3-deoxyribose 5'-phosphate)-DNA + a 5'-end 5'-phospho-2'-deoxyribonucleoside-DNA + H(+). In terms of biological role, involved in base excision repair of DNA damaged by oxidation or by mutagenic agents. Acts as a DNA glycosylase that recognizes and removes damaged bases. Has a preference for oxidized pyrimidines, such as thymine glycol, 5,6-dihydrouracil and 5,6-dihydrothymine. Has AP (apurinic/apyrimidinic) lyase activity and introduces nicks in the DNA strand. Cleaves the DNA backbone by beta-delta elimination to generate a single-strand break at the site of the removed base with both 3'- and 5'-phosphates. In Escherichia coli O9:H4 (strain HS), this protein is Endonuclease 8.